Here is a 285-residue protein sequence, read N- to C-terminus: MPITTAASRLGTSAFSNAAPIELRSNTNKAEIAQVIAAIYRQVLGNDYVLQSERLKGLESLLTNGNITVQEFVRQLAKSNLYKSKFFSNNFHSRVTELNFKHLLGRAPYDESEIIYHLDLYQTKGYEADIDSYIDSAEYQTNFADNIVPYYRGFNNQLGQKTVGFTRIFQLYRGYATSDRSQIPGASARLANELARNSASTVIAPAGSNNGFAYRASVKGKTPSTAFQGSQAFGSGRLYRVEVAAISQPAIQVRRINKRSIHRRTIQLFPTSSTSQWQIASVTPL.

The 180-residue stretch at 1–180 (MPITTAASRL…LYRGYATSDR (180 aa)) folds into the PBS-linker domain.

This sequence belongs to the phycobilisome linker protein family.

The protein localises to the cellular thylakoid membrane. Its function is as follows. Rod linker protein, associated with phycocyanin. Linker polypeptides determine the state of aggregation and the location of the disk-shaped phycobiliprotein units within the phycobilisome and modulate their spectroscopic properties in order to mediate a directed and optimal energy transfer. This is Phycobilisome 31.6 kDa linker polypeptide, phycocyanin-associated, rod (cpcI3) from Microchaete diplosiphon (Fremyella diplosiphon).